The following is a 294-amino-acid chain: 2-methoxy-6-polyprenyl-1,4-benzoquinol methylase, mitochondrial (294 aa).

Residues 1–10 constitute a mitochondrion transit peptide; sequence MALRSAAGRL. S-adenosyl-L-methionine is bound by residues Thr100, Asp136, and 166–167; that span reads DA.

The protein belongs to the class I-like SAM-binding methyltransferase superfamily. MenG/UbiE family. Component of a multi-subunit COQ enzyme complex.

Its subcellular location is the mitochondrion inner membrane. The enzyme catalyses a 2-methoxy-6-(all-trans-polyprenyl)benzene-1,4-diol + S-adenosyl-L-methionine = a 5-methoxy-2-methyl-3-(all-trans-polyprenyl)benzene-1,4-diol + S-adenosyl-L-homocysteine + H(+). Its pathway is cofactor biosynthesis; ubiquinone biosynthesis. Its function is as follows. Methyltransferase required for the conversion of 2-polyprenyl-6-methoxy-1,4-benzoquinol (DDMQH2) to 2-polyprenyl-3-methyl-6-methoxy-1,4-benzoquinol (DMQH2). In Oryza sativa subsp. japonica (Rice), this protein is 2-methoxy-6-polyprenyl-1,4-benzoquinol methylase, mitochondrial.